A 341-amino-acid chain; its full sequence is tRNA N6-adenosine threonylcarbamoyltransferase (341 aa).

Fe cation contacts are provided by His111 and His115. Substrate-binding positions include 133 to 137, Asp166, Gly179, Asp183, and Asn271; that span reads VVSGG. A Fe cation-binding site is contributed by Asp299.

It belongs to the KAE1 / TsaD family. Fe(2+) serves as cofactor.

The protein localises to the cytoplasm. The enzyme catalyses L-threonylcarbamoyladenylate + adenosine(37) in tRNA = N(6)-L-threonylcarbamoyladenosine(37) in tRNA + AMP + H(+). Its function is as follows. Required for the formation of a threonylcarbamoyl group on adenosine at position 37 (t(6)A37) in tRNAs that read codons beginning with adenine. Is involved in the transfer of the threonylcarbamoyl moiety of threonylcarbamoyl-AMP (TC-AMP) to the N6 group of A37, together with TsaE and TsaB. TsaD likely plays a direct catalytic role in this reaction. The chain is tRNA N6-adenosine threonylcarbamoyltransferase from Fusobacterium nucleatum subsp. nucleatum (strain ATCC 25586 / DSM 15643 / BCRC 10681 / CIP 101130 / JCM 8532 / KCTC 2640 / LMG 13131 / VPI 4355).